We begin with the raw amino-acid sequence, 347 residues long: Endophilin-A3 (347 aa).

Residues 1-21 (MSVAGLKKQFHKASQLFSEKI) are membrane-binding amphipathic helix. The 232-residue stretch at 18 to 249 (SEKISGAEGT…LELRISLASK (232 aa)) folds into the BAR domain. Positions 60–87 (PNPAYRAKLGMLNTVSKLRGQVKATGYP) are required for dimerization upon membrane association. Residues 180-201 (EEEIRQAVEKFEESKELAERSM) adopt a coiled-coil conformation. An interaction with ARC region spans residues 218–254 (FVEAALDYHRQSTEILQELQSKLELRISLASKVPKRE). Positions 255-288 (FMPKPVNMSSTDANGVGPSSSSKTPGTDTPADQP) are disordered. Positions 261-281 (NMSSTDANGVGPSSSSKTPGT) are enriched in polar residues. Residues 285–344 (ADQPCCRGLYDFEPENEGELGFKEGDIITLTNQIDENWYEGMLRGESGFFPINYVEVIVP) form the SH3 domain.

Belongs to the endophilin family. In terms of assembly, interacts with ARC, DNM1, SGIP1, SYNJ1 and DYDC1. Interacts with FASLG. Interacts with ATXN2. Interacts with BIN2.

Its subcellular location is the cytoplasm. The protein resides in the early endosome membrane. Implicated in endocytosis. May recruit other proteins to membranes with high curvature. This is Endophilin-A3 (Sh3gl3) from Mus musculus (Mouse).